The sequence spans 356 residues: Fe(3+) ions import ATP-binding protein FbpC 2 (356 aa).

The 235-residue stretch at Leu-12–Met-246 folds into the ABC transporter domain. An ATP-binding site is contributed by Gly-44–Thr-51.

The protein belongs to the ABC transporter superfamily. Fe(3+) ion importer (TC 3.A.1.10) family. As to quaternary structure, the complex is composed of two ATP-binding proteins (FbpC), two transmembrane proteins (FbpB) and a solute-binding protein (FbpA).

It is found in the cell inner membrane. The catalysed reaction is Fe(3+)(out) + ATP + H2O = Fe(3+)(in) + ADP + phosphate + H(+). Its function is as follows. Part of the ABC transporter complex FbpABC involved in Fe(3+) ions import. Responsible for energy coupling to the transport system. This chain is Fe(3+) ions import ATP-binding protein FbpC 2, found in Haemophilus influenzae (strain ATCC 51907 / DSM 11121 / KW20 / Rd).